A 388-amino-acid chain; its full sequence is Na(+)/H(+) antiporter NhaA (388 aa).

A run of 12 helical transmembrane segments spans residues A13–P33, G36–A56, L59–V79, V95–F115, G125–G145, V154–F174, V179–W199, L213–I233, V259–V279, L287–F307, V328–L348, and L363–S383.

It belongs to the NhaA Na(+)/H(+) (TC 2.A.33) antiporter family.

The protein localises to the cell inner membrane. It carries out the reaction Na(+)(in) + 2 H(+)(out) = Na(+)(out) + 2 H(+)(in). In terms of biological role, na(+)/H(+) antiporter that extrudes sodium in exchange for external protons. This Serratia proteamaculans (strain 568) protein is Na(+)/H(+) antiporter NhaA.